The chain runs to 463 residues: Glutamate--tRNA ligase 2 (463 aa).

A 'HIGH' region motif is present at residues proline 10–serine 20. A 'KMSKS' region motif is present at residues lysine 239–arginine 243. Lysine 242 serves as a coordination point for ATP.

Belongs to the class-I aminoacyl-tRNA synthetase family. Glutamate--tRNA ligase type 1 subfamily. As to quaternary structure, monomer.

The protein localises to the cytoplasm. The enzyme catalyses tRNA(Glu) + L-glutamate + ATP = L-glutamyl-tRNA(Glu) + AMP + diphosphate. Functionally, catalyzes the attachment of glutamate to tRNA(Glu) in a two-step reaction: glutamate is first activated by ATP to form Glu-AMP and then transferred to the acceptor end of tRNA(Glu). The chain is Glutamate--tRNA ligase 2 from Rickettsia akari (strain Hartford).